A 346-amino-acid polypeptide reads, in one-letter code: Phenylalanine--tRNA ligase alpha subunit (346 aa).

Position 259 (glutamate 259) interacts with Mg(2+).

This sequence belongs to the class-II aminoacyl-tRNA synthetase family. Phe-tRNA synthetase alpha subunit type 1 subfamily. In terms of assembly, tetramer of two alpha and two beta subunits. It depends on Mg(2+) as a cofactor.

It is found in the cytoplasm. The enzyme catalyses tRNA(Phe) + L-phenylalanine + ATP = L-phenylalanyl-tRNA(Phe) + AMP + diphosphate + H(+). This Lactococcus lactis subsp. lactis (strain IL1403) (Streptococcus lactis) protein is Phenylalanine--tRNA ligase alpha subunit.